The following is a 459-amino-acid chain: Putrescine aminotransferase (459 aa).

Pyridoxal 5'-phosphate-binding positions include 150–151 (GT) and Gln274. N6-(pyridoxal phosphate)lysine is present on Lys300. Pyridoxal 5'-phosphate is bound at residue Thr332.

Belongs to the class-III pyridoxal-phosphate-dependent aminotransferase family. Putrescine aminotransferase subfamily. The cofactor is pyridoxal 5'-phosphate.

The enzyme catalyses an alkane-alpha,omega-diamine + 2-oxoglutarate = an omega-aminoaldehyde + L-glutamate. It catalyses the reaction putrescine + 2-oxoglutarate = 1-pyrroline + L-glutamate + H2O. It carries out the reaction cadaverine + 2-oxoglutarate = 5-aminopentanal + L-glutamate. It participates in amine and polyamine degradation; putrescine degradation; 4-aminobutanal from putrescine (transaminase route): step 1/1. In terms of biological role, catalyzes the aminotransferase reaction from putrescine to 2-oxoglutarate, leading to glutamate and 4-aminobutanal, which spontaneously cyclizes to form 1-pyrroline. This is the first step in one of two pathways for putrescine degradation, where putrescine is converted into 4-aminobutanoate (gamma-aminobutyrate or GABA) via 4-aminobutanal. Also functions as a cadaverine transaminase in a a L-lysine degradation pathway to succinate that proceeds via cadaverine, glutarate and L-2-hydroxyglutarate. This is Putrescine aminotransferase from Klebsiella pneumoniae (strain 342).